Reading from the N-terminus, the 586-residue chain is Protein NRT1/ PTR FAMILY 5.3 (586 aa).

11 helical membrane-spanning segments follow: residues 77–97, 100–120, 141–161, 189–209, 217–237, 334–354, 370–390, 408–428, 449–469, 492–512, and 538–558; these read WVGTSWLTPILGAYVADAHFG, ITFVISSAIYLLGMALLTLSV, ASVIQLAVFFGALYTLAIGTG, FFNWWMFSIFFGTFFATTVLV, WAIGYGLSTLGLAFSIFIFLL, PVLFVTFVPSMMLAQIMTLFI, IPPASLLGFTTFSMLVSIVIY, ITLLQRMGIGMILHILIMIIA, AVPIPLSIFTLLPQYVLMGLA, LGTSYTSTSMAVGYFMSSILL, and NYYMFFAVLNLLNFILFLVVI.

The protein belongs to the major facilitator superfamily. Proton-dependent oligopeptide transporter (POT/PTR) (TC 2.A.17) family. As to expression, expressed in roots and siliques.

The protein resides in the membrane. In terms of biological role, peptide transporter. The polypeptide is Protein NRT1/ PTR FAMILY 5.3 (NPF5.3) (Arabidopsis thaliana (Mouse-ear cress)).